Here is a 357-residue protein sequence, read N- to C-terminus: Acyl-coenzyme A diphosphatase NUDT19 (357 aa).

Residues 10–242 (AATVMLAAGW…IWLAPPQFYE (233 aa)) enclose the Nudix hydrolase domain. Positions 97–118 (AALPDDVALRICAIRETFEEAG) match the Nudix box motif. Residues Glu112 and Glu116 each coordinate Mg(2+). Lys300 bears the N6-succinyllysine mark. Residues 355-357 (ARL) carry the Microbody targeting signal motif.

This sequence belongs to the Nudix hydrolase family. As to quaternary structure, monomer. It depends on Mg(2+) as a cofactor. Mn(2+) is required as a cofactor.

Its subcellular location is the peroxisome. It carries out the reaction an acyl-CoA + H2O = an acyl-4'-phosphopantetheine + adenosine 3',5'-bisphosphate + 2 H(+). The enzyme catalyses CoA + H2O = (R)-4'-phosphopantetheine + adenosine 3',5'-bisphosphate + 2 H(+). The catalysed reaction is hexanoyl-CoA + H2O = hexanoyl-4'-phosphopantetheine + adenosine 3',5'-bisphosphate + 2 H(+). It catalyses the reaction octanoyl-CoA + H2O = S-octanoyl-4'-phosphopantetheine + adenosine 3',5'-bisphosphate + 2 H(+). It carries out the reaction butanoyl-CoA + H2O = S-butanoyl-4'-phosphopantetheine + adenosine 3',5'-bisphosphate + 2 H(+). The enzyme catalyses propanoyl-CoA + H2O = propanoyl-4'-phosphopantetheine + adenosine 3',5'-bisphosphate + 2 H(+). The catalysed reaction is malonyl-CoA + H2O = malonyl-4'-phosphopantetheine + adenosine 3',5'-bisphosphate + 2 H(+). It catalyses the reaction succinyl-CoA + H2O = succinyl-4'-phosphopantetheine + adenosine 3',5'-bisphosphate + 2 H(+). It carries out the reaction choloyl-CoA + H2O = S-choloyl-4'-phosphopantetheine + adenosine 3',5'-bisphosphate + 2 H(+). The enzyme catalyses 4,8-dimethylnonanoyl-CoA + H2O = S-(4,8-dimethylnonanoyl)-4'-phosphopantetheine + adenosine 3',5'-bisphosphate + 2 H(+). The catalysed reaction is (9Z,12Z,15Z)-octadecatrienoyl-CoA + H2O = S-(9Z,12Z,15Z-octadecatrienoyl)-4'-phosphopantetheine + adenosine 3',5'-bisphosphate + 2 H(+). It catalyses the reaction (9Z,12Z)-octadecadienoyl-CoA + H2O = S-(9Z,12Z-octadecadienoyl)-4'-phosphopantetheine + adenosine 3',5'-bisphosphate + 2 H(+). It carries out the reaction (9Z)-hexadecenoyl-CoA + H2O = S-(9Z-hexadecenoyl)-4'-phosphopantetheine + adenosine 3',5'-bisphosphate + 2 H(+). The enzyme catalyses (9Z)-tetradecenoyl-CoA + H2O = S-(9Z-tetradecenoyl)-4'-phosphopantetheine + adenosine 3',5'-bisphosphate + 2 H(+). The catalysed reaction is (6Z)-octenoyl-CoA + H2O = S-(6Z-octenoyl)-4'-phosphopantetheine + adenosine 3',5'-bisphosphate + 2 H(+). It catalyses the reaction hexadecanoyl-CoA + H2O = S-hexadecanoyl-4'-phosphopantetheine + adenosine 3',5'-bisphosphate + 2 H(+). It carries out the reaction tetradecanoyl-CoA + H2O = tetradecanoyl-4'-phosphopantetheine + adenosine 3',5'-bisphosphate + 2 H(+). The enzyme catalyses dodecanoyl-CoA + H2O = S-dodecanoyl-4'-phosphopantetheine + adenosine 3',5'-bisphosphate + 2 H(+). The catalysed reaction is a 5'-end CoA-ribonucleoside in mRNA + H2O = a 5'-end phospho-adenosine-phospho-ribonucleoside in mRNA + (R)-4'-phosphopantetheine + 2 H(+). Functionally, fatty acyl-coenzyme A (CoA) diphosphatase that hydrolyzes fatty acyl-CoA to yield acyl-4'-phosphopantetheine and adenosine 3',5'-bisphosphate. Mediates the hydrolysis of a wide range of CoA esters, including choloyl-CoA and branched-chain fatty-acyl-CoA esters and at low substrate concentrations medium and long-chain fatty-acyl-CoA esters are the primary substrates. Highest activity seen with medium-chain acyl-CoA esters and higher rates of activity seen with the unsaturated acyl-CoA esters compared with the saturated esters. Exhibits decapping activity towards dpCoA-capped RNAs in vitro. The sequence is that of Acyl-coenzyme A diphosphatase NUDT19 (Nudt19) from Rattus norvegicus (Rat).